The chain runs to 457 residues: UDP-N-acetylmuramate--L-alanine ligase (457 aa).

112–118 (GAHGKTS) is an ATP binding site.

This sequence belongs to the MurCDEF family.

Its subcellular location is the cytoplasm. It catalyses the reaction UDP-N-acetyl-alpha-D-muramate + L-alanine + ATP = UDP-N-acetyl-alpha-D-muramoyl-L-alanine + ADP + phosphate + H(+). The protein operates within cell wall biogenesis; peptidoglycan biosynthesis. Its function is as follows. Cell wall formation. The chain is UDP-N-acetylmuramate--L-alanine ligase from Desulfosudis oleivorans (strain DSM 6200 / JCM 39069 / Hxd3) (Desulfococcus oleovorans).